Here is a 586-residue protein sequence, read N- to C-terminus: Arginine--tRNA ligase (586 aa).

The short motif at 128-138 (ANPTGPLHVGH) is the 'HIGH' region element.

Belongs to the class-I aminoacyl-tRNA synthetase family. Monomer.

Its subcellular location is the cytoplasm. The enzyme catalyses tRNA(Arg) + L-arginine + ATP = L-arginyl-tRNA(Arg) + AMP + diphosphate. This Legionella pneumophila (strain Corby) protein is Arginine--tRNA ligase.